Here is a 58-residue protein sequence, read N- to C-terminus: Gigasin-4 (58 aa).

As to expression, component of the organic matrix of calcified shell layers.

The sequence is that of Gigasin-4 from Magallana gigas (Pacific oyster).